The sequence spans 336 residues: Casein kinase I isoform beta (336 aa).

One can recognise a Protein kinase domain in the interval tyrosine 17–phenylalanine 285. ATP-binding positions include isoleucine 23–valine 31 and lysine 46. The Proton acceptor role is filled by aspartate 136. The span at alanine 309–glutamine 320 shows a compositional bias: low complexity. The interval alanine 309–serine 336 is disordered. Positions aspartate 327–serine 336 are enriched in basic and acidic residues.

The protein belongs to the protein kinase superfamily. CK1 Ser/Thr protein kinase family. Casein kinase I subfamily. In terms of assembly, monomer.

Its subcellular location is the cytoplasm. The enzyme catalyses L-seryl-[protein] + ATP = O-phospho-L-seryl-[protein] + ADP + H(+). It carries out the reaction L-threonyl-[protein] + ATP = O-phospho-L-threonyl-[protein] + ADP + H(+). Casein kinases are operationally defined by their preferential utilization of acidic proteins such as caseins as substrates. It can phosphorylate a large number of proteins. Participates in Wnt signaling. This chain is Casein kinase I isoform beta (CSNK1B), found in Bos taurus (Bovine).